Consider the following 202-residue polypeptide: MTGDFAFVDELVSGIRWDAKYATWDNFTGKPVDGYLANRIVGTKALCAALGRAQERAEDLGFGLLLWDGYRPQRAVDCFLRWSQQPEDGRTKARHYPNIGRAEMFDRGYVAARSGHSRGATVDLTLYHLTTGELAAMGGGHDLMDPISHHDARDVPRAEAANRRHLRSIMAACGFASYACEWWHYTLKEEPHPDTYFDFPIA.

Zn(2+)-binding residues include H116 and D123. E181 (proton donor/acceptor) is an active-site residue. Residue H184 participates in Zn(2+) binding.

This sequence belongs to the peptidase M15D family. Requires Zn(2+) as cofactor.

The catalysed reaction is D-alanyl-D-alanine + H2O = 2 D-alanine. Functionally, catalyzes hydrolysis of the D-alanyl-D-alanine dipeptide. May play a role in immunity or defense against glycopeptide antibiotics (perhaps at a moderate level) in the soil environment. Might confer vancomycin resistance to S.coelicolor. This Streptomyces coelicolor (strain ATCC BAA-471 / A3(2) / M145) protein is D-alanyl-D-alanine dipeptidase (vanX).